The following is a 593-amino-acid chain: Arginine--tRNA ligase (593 aa).

Residues 123–133 (PNVAKPMHVGH) carry the 'HIGH' region motif.

The protein belongs to the class-I aminoacyl-tRNA synthetase family. Monomer.

It is found in the cytoplasm. The enzyme catalyses tRNA(Arg) + L-arginine + ATP = L-arginyl-tRNA(Arg) + AMP + diphosphate. This Phenylobacterium zucineum (strain HLK1) protein is Arginine--tRNA ligase.